The following is an 869-amino-acid chain: Bifunctional uridylyltransferase/uridylyl-removing enzyme (869 aa).

The interval 1 to 332 (MTDTPAERPD…QFDGEATPEP (332 aa)) is uridylyltransferase. Positions 333–691 (LGGGFSLRRG…RRAVPDNDAL (359 aa)) are uridylyl-removing. The HD domain maps to 450–572 (VDQHTLMVLR…VGTRERLDYL (123 aa)). 2 consecutive ACT domains span residues 692–774 (EVFV…RAVP) and 798–869 (RISL…LDPV).

It belongs to the GlnD family. It depends on Mg(2+) as a cofactor.

The catalysed reaction is [protein-PII]-L-tyrosine + UTP = [protein-PII]-uridylyl-L-tyrosine + diphosphate. The enzyme catalyses [protein-PII]-uridylyl-L-tyrosine + H2O = [protein-PII]-L-tyrosine + UMP + H(+). With respect to regulation, uridylyltransferase (UTase) activity is inhibited by glutamine, while glutamine activates uridylyl-removing (UR) activity. Its function is as follows. Modifies, by uridylylation and deuridylylation, the PII regulatory proteins (GlnB and homologs), in response to the nitrogen status of the cell that GlnD senses through the glutamine level. Under low glutamine levels, catalyzes the conversion of the PII proteins and UTP to PII-UMP and PPi, while under higher glutamine levels, GlnD hydrolyzes PII-UMP to PII and UMP (deuridylylation). Thus, controls uridylylation state and activity of the PII proteins, and plays an important role in the regulation of nitrogen assimilation and metabolism. The chain is Bifunctional uridylyltransferase/uridylyl-removing enzyme from Xanthomonas euvesicatoria pv. vesicatoria (strain 85-10) (Xanthomonas campestris pv. vesicatoria).